The primary structure comprises 276 residues: Ribosomal RNA small subunit methyltransferase A (276 aa).

Asn-27, Leu-29, Gly-54, Glu-75, Asp-101, and Asn-123 together coordinate S-adenosyl-L-methionine.

The protein belongs to the class I-like SAM-binding methyltransferase superfamily. rRNA adenine N(6)-methyltransferase family. RsmA subfamily.

It is found in the cytoplasm. It carries out the reaction adenosine(1518)/adenosine(1519) in 16S rRNA + 4 S-adenosyl-L-methionine = N(6)-dimethyladenosine(1518)/N(6)-dimethyladenosine(1519) in 16S rRNA + 4 S-adenosyl-L-homocysteine + 4 H(+). Its function is as follows. Specifically dimethylates two adjacent adenosines (A1518 and A1519) in the loop of a conserved hairpin near the 3'-end of 16S rRNA in the 30S particle. May play a critical role in biogenesis of 30S subunits. The polypeptide is Ribosomal RNA small subunit methyltransferase A (Bartonella tribocorum (strain CIP 105476 / IBS 506)).